Here is an 816-residue protein sequence, read N- to C-terminus: Neuroligin-4, X-linked (816 aa).

A signal peptide spans Met-1 to Ser-41. The Extracellular segment spans residues Gln-42–Ser-676. Residue Asn-102 is glycosylated (N-linked (GlcNAc...) asparagine). 2 disulfides stabilise this stretch: Cys-110-Cys-146 and Cys-306-Cys-317. Residues Gln-359–Asn-364 form an interaction with NRXN1 region. Cys-476 and Cys-510 are oxidised to a cystine. Asn-511 carries an N-linked (GlcNAc...) asparagine glycan. The disordered stretch occupies residues Thr-636 to Glu-659. Basic and acidic residues predominate over residues His-649 to Pro-658. The chain crosses the membrane as a helical span at residues Val-677–Tyr-697. At Tyr-698–Val-816 the chain is on the cytoplasmic side. A Phosphoserine modification is found at Ser-712.

Belongs to the type-B carboxylesterase/lipase family. As to quaternary structure, homodimer. Interacts with NRXN1 in a calcium-dependent manner. Interaction with neurexins is mediated by heparan sulfate glycan modification on neurexin. Interacts through its C-terminus with DLG4/PSD-95 third PDZ domain. As to expression, expressed at highest levels in heart. Expressed at lower levels in liver, skeletal muscle and pancreas and at very low levels in brain.

It localises to the cell membrane. The protein resides in the postsynaptic density membrane. In terms of biological role, cell surface protein involved in cell-cell-interactions via its interactions with neurexin family members. This is Neuroligin-4, X-linked (NLGN4X) from Homo sapiens (Human).